The following is a 395-amino-acid chain: Chalcone synthase 3 (395 aa).

An N-acetylvaline modification is found at Val-2. Cys-169 is a catalytic residue.

This sequence belongs to the thiolase-like superfamily. Chalcone/stilbene synthases family.

It carries out the reaction (E)-4-coumaroyl-CoA + 3 malonyl-CoA + 3 H(+) = 2',4,4',6'-tetrahydroxychalcone + 3 CO2 + 4 CoA. It functions in the pathway secondary metabolite biosynthesis; flavonoid biosynthesis. The primary product of this enzyme is 4,2',4',6'-tetrahydroxychalcone (also termed naringenin-chalcone or chalcone) which can under specific conditions spontaneously isomerize into naringenin. This is Chalcone synthase 3 (CHS3) from Sinapis alba (White mustard).